Here is a 258-residue protein sequence, read N- to C-terminus: Acyl-[acyl-carrier-protein]--UDP-N-acetylglucosamine O-acyltransferase (258 aa).

Belongs to the transferase hexapeptide repeat family. LpxA subfamily. Homotrimer.

It is found in the cytoplasm. It carries out the reaction a (3R)-hydroxyacyl-[ACP] + UDP-N-acetyl-alpha-D-glucosamine = a UDP-3-O-[(3R)-3-hydroxyacyl]-N-acetyl-alpha-D-glucosamine + holo-[ACP]. The protein operates within glycolipid biosynthesis; lipid IV(A) biosynthesis; lipid IV(A) from (3R)-3-hydroxytetradecanoyl-[acyl-carrier-protein] and UDP-N-acetyl-alpha-D-glucosamine: step 1/6. Functionally, involved in the biosynthesis of lipid A, a phosphorylated glycolipid that anchors the lipopolysaccharide to the outer membrane of the cell. The polypeptide is Acyl-[acyl-carrier-protein]--UDP-N-acetylglucosamine O-acyltransferase (Syntrophobacter fumaroxidans (strain DSM 10017 / MPOB)).